The sequence spans 197 residues: GTP cyclohydrolase-2 (197 aa).

Arg-50 to Glu-54 lines the GTP pocket. Zn(2+)-binding residues include Cys-55, Cys-66, and Cys-68. GTP is bound by residues Gln-71, Glu-93–Arg-95, and Thr-115. Asp-127 (proton acceptor) is an active-site residue. Catalysis depends on Arg-129, which acts as the Nucleophile. GTP-binding residues include Thr-150 and Lys-155.

This sequence belongs to the GTP cyclohydrolase II family. The cofactor is Zn(2+).

The catalysed reaction is GTP + 4 H2O = 2,5-diamino-6-hydroxy-4-(5-phosphoribosylamino)-pyrimidine + formate + 2 phosphate + 3 H(+). The protein operates within cofactor biosynthesis; riboflavin biosynthesis; 5-amino-6-(D-ribitylamino)uracil from GTP: step 1/4. In terms of biological role, catalyzes the conversion of GTP to 2,5-diamino-6-ribosylamino-4(3H)-pyrimidinone 5'-phosphate (DARP), formate and pyrophosphate. This chain is GTP cyclohydrolase-2, found in Neisseria meningitidis serogroup C (strain 053442).